The chain runs to 85 residues: Small ribosomal subunit protein uS17 (85 aa).

This sequence belongs to the universal ribosomal protein uS17 family. In terms of assembly, part of the 30S ribosomal subunit.

Its function is as follows. One of the primary rRNA binding proteins, it binds specifically to the 5'-end of 16S ribosomal RNA. The sequence is that of Small ribosomal subunit protein uS17 from Desulforudis audaxviator (strain MP104C).